The primary structure comprises 256 residues: tRNA pseudouridine synthase A (256 aa).

Residue Asp-43 is the Nucleophile of the active site. Tyr-94 is a binding site for substrate.

Belongs to the tRNA pseudouridine synthase TruA family.

It carries out the reaction uridine(38/39/40) in tRNA = pseudouridine(38/39/40) in tRNA. Formation of pseudouridine at positions 38, 39 and 40 in the anticodon stem and loop of transfer RNAs. The protein is tRNA pseudouridine synthase A of Pyrobaculum aerophilum (strain ATCC 51768 / DSM 7523 / JCM 9630 / CIP 104966 / NBRC 100827 / IM2).